Reading from the N-terminus, the 434-residue chain is MIEKVYCQEVKPELDGKKVRLAGWVYTNMRVGKKIFLWIRDSTGIVQAVVAKNVVGEETFEKAKKLGRESSVIVEGIVKADERAPGGAEVHVEKLEVIQAVSEFPIPENPEQASPELLLDYRHLHIRTPKASAIMKVKETLIMAAREWLLKDGWHEVFPPILVTGAVEGGATLFKLKYFDKYAYLSQSAQLYLEAAIFGLEKVWSLTPSFRAEKSRTRRHLTEFWHLELEAAWMDLWDIMKVEEELVSYMVQRTLELRKKEIEMFRDDLTTLKNTEPPFPRISYDEAIDILQSKGVNVEWGDDLGADEERVLTEEFDRPFFVYGYPKHIKAFYMKEDPNDPRKVLASDMLAPEGYGEIIGGSQREDDYDKLLNRILEEGMDPKDYEWYLDLRRYGSVPHSGFGLGVERLVAWVLKLDHIRWAALFPRTPARLYP.

The protein belongs to the class-II aminoacyl-tRNA synthetase family.

The protein localises to the cytoplasm. The catalysed reaction is tRNA(Asn) + L-asparagine + ATP = L-asparaginyl-tRNA(Asn) + AMP + diphosphate + H(+). In Pyrococcus horikoshii (strain ATCC 700860 / DSM 12428 / JCM 9974 / NBRC 100139 / OT-3), this protein is Asparagine--tRNA ligase.